The sequence spans 786 residues: Endonuclease MutS2 (786 aa).

335-342 (GPNTGGKT) contributes to the ATP binding site. Positions 711–786 (LDLRGERFEN…GLGVTVVELK (76 aa)) constitute a Smr domain.

The protein belongs to the DNA mismatch repair MutS family. MutS2 subfamily. Homodimer. Binds to stalled ribosomes, contacting rRNA.

Endonuclease that is involved in the suppression of homologous recombination and thus may have a key role in the control of bacterial genetic diversity. Functionally, acts as a ribosome collision sensor, splitting the ribosome into its 2 subunits. Detects stalled/collided 70S ribosomes which it binds and splits by an ATP-hydrolysis driven conformational change. Acts upstream of the ribosome quality control system (RQC), a ribosome-associated complex that mediates the extraction of incompletely synthesized nascent chains from stalled ribosomes and their subsequent degradation. Probably generates substrates for RQC. This Bacillus cereus (strain B4264) protein is Endonuclease MutS2.